A 97-amino-acid polypeptide reads, in one-letter code: MTDLRHYDVIVSPAITEKSTLVSENNQVVFNVAKQATKPEIKAAVEALFGVKVTAVNTLLRKGKTKRFRGFVGKQKDVKKAVVTLAEGQTIDVSTGL.

The protein belongs to the universal ribosomal protein uL23 family. In terms of assembly, part of the 50S ribosomal subunit. Contacts protein L29, and trigger factor when it is bound to the ribosome.

One of the early assembly proteins it binds 23S rRNA. One of the proteins that surrounds the polypeptide exit tunnel on the outside of the ribosome. Forms the main docking site for trigger factor binding to the ribosome. This Rhizobium etli (strain CIAT 652) protein is Large ribosomal subunit protein uL23.